The following is a 471-amino-acid chain: Soluble pyridine nucleotide transhydrogenase (471 aa).

FAD is bound at residue 41–50 (EREPSVGGGC).

Belongs to the class-I pyridine nucleotide-disulfide oxidoreductase family. The cofactor is FAD.

It is found in the cytoplasm. The catalysed reaction is NAD(+) + NADPH = NADH + NADP(+). Conversion of NADPH, generated by peripheral catabolic pathways, to NADH, which can enter the respiratory chain for energy generation. This is Soluble pyridine nucleotide transhydrogenase from Aliivibrio fischeri (strain ATCC 700601 / ES114) (Vibrio fischeri).